Here is a 500-residue protein sequence, read N- to C-terminus: Apolipoprotein N-acyltransferase (500 aa).

Helical transmembrane passes span 5-25 (VAPF…WIFV), 38-58 (LLLL…FWIT), 74-94 (LAIT…FGAI), 111-131 (ILIG…GPLW), 145-165 (AILH…IVSV), and 185-205 (LAIA…LYTA). Residues 215–462 (LKVGIVQGNI…ETIYRRQTQN (248 aa)) enclose the CN hydrolase domain. Catalysis depends on E261, which acts as the Proton acceptor. K318 is a catalytic residue. Residue C369 is the Nucleophile of the active site. The chain crosses the membrane as a helical span at residues 469–489 (DWFTPLLVGLSFLGWSLNIFW).

Belongs to the CN hydrolase family. Apolipoprotein N-acyltransferase subfamily.

It is found in the cell inner membrane. The catalysed reaction is N-terminal S-1,2-diacyl-sn-glyceryl-L-cysteinyl-[lipoprotein] + a glycerophospholipid = N-acyl-S-1,2-diacyl-sn-glyceryl-L-cysteinyl-[lipoprotein] + a 2-acyl-sn-glycero-3-phospholipid + H(+). Its pathway is protein modification; lipoprotein biosynthesis (N-acyl transfer). Functionally, catalyzes the phospholipid dependent N-acylation of the N-terminal cysteine of apolipoprotein, the last step in lipoprotein maturation. This is Apolipoprotein N-acyltransferase from Nostoc sp. (strain PCC 7120 / SAG 25.82 / UTEX 2576).